The chain runs to 518 residues: Protein translocase subunit SecD (518 aa).

A run of 6 helical transmembrane segments spans residues 9 to 29 (IVLSIICTVFAIICALPNFIQ), 356 to 376 (GKKAGLIGFTAVCIFMILSYG), 377 to 397 (VIGLFANIALILALLYILALL), 406 to 426 (LPGIAGIILTMGMAVDANVLI), 451 to 473 (AFATIIDSNLTTLIVAFALYIFG), and 486 to 506 (IGIISSMFSAIIITKLLIDIW).

The protein belongs to the SecD/SecF family. SecD subfamily. Forms a complex with SecF. Part of the essential Sec protein translocation apparatus which comprises SecA, SecYEG and auxiliary proteins SecDF-YajC and YidC.

The protein localises to the cell inner membrane. In terms of biological role, part of the Sec protein translocase complex. Interacts with the SecYEG preprotein conducting channel. SecDF uses the proton motive force (PMF) to complete protein translocation after the ATP-dependent function of SecA. This is Protein translocase subunit SecD from Rickettsia typhi (strain ATCC VR-144 / Wilmington).